A 608-amino-acid chain; its full sequence is AAA ATPase forming ring-shaped complexes (608 aa).

A coiled-coil region spans residues 45–79; it reads AQEYDAVLRRLSAAEATRDNMSRQIRGAGEKNRKL. 302-307 is a binding site for ATP; sequence GNGKTM.

It belongs to the AAA ATPase family. In terms of assembly, homohexamer. Assembles into a hexameric ring structure.

The chain is AAA ATPase forming ring-shaped complexes from Rothia mucilaginosa (strain DY-18) (Stomatococcus mucilaginosus).